A 261-amino-acid chain; its full sequence is Cytochrome c oxidase subunit 3 (261 aa).

At 1–15 the chain is on the mitochondrial matrix side; the sequence is MTHQLHAYHMVKPSP. Residues 16-34 traverse the membrane as a helical segment; sequence WPLTGALSAFLLTSGLIMW. Residues 35–40 lie on the Mitochondrial intermembrane side of the membrane; it reads FHFYST. Residues 41 to 66 form a helical membrane-spanning segment; sequence ALLTLGLLTNVLTMYQWWRDIIREST. Over 67–72 the chain is Mitochondrial matrix; sequence YQGHHT. A helical transmembrane segment spans residues 73 to 105; sequence TPVQKSLRYGMTLFIISEVFFFAGFFWAFYHSS. Residues 106 to 128 are Mitochondrial intermembrane-facing; sequence LAPTPRLGCHWPPTGITPLNPLE. A helical transmembrane segment spans residues 129 to 152; it reads VPLLNTSVLLASGVTITWAHHSLM. Topologically, residues 153–155 are mitochondrial matrix; the sequence is NGN. Residues 156 to 183 traverse the membrane as a helical segment; that stretch reads RKQTIQALLITILLGTYFTLVQISEYFE. At 184–190 the chain is on the mitochondrial intermembrane side; that stretch reads APFTISD. A helical transmembrane segment spans residues 191-223; it reads GIYGSTFFVATGFHGLHVIIGSTFLLICLIRQL. Residues 224 to 232 are Mitochondrial matrix-facing; that stretch reads FYHFTPSHH. The chain crosses the membrane as a helical span at residues 233-256; the sequence is FGFEAAAWYWHFVDVIWLFLYISI. The Mitochondrial intermembrane segment spans residues 257–261; the sequence is YWWGS.

It belongs to the cytochrome c oxidase subunit 3 family. As to quaternary structure, component of the cytochrome c oxidase (complex IV, CIV), a multisubunit enzyme composed of 14 subunits. The complex is composed of a catalytic core of 3 subunits MT-CO1, MT-CO2 and MT-CO3, encoded in the mitochondrial DNA, and 11 supernumerary subunits COX4I, COX5A, COX5B, COX6A, COX6B, COX6C, COX7A, COX7B, COX7C, COX8 and NDUFA4, which are encoded in the nuclear genome. The complex exists as a monomer or a dimer and forms supercomplexes (SCs) in the inner mitochondrial membrane with NADH-ubiquinone oxidoreductase (complex I, CI) and ubiquinol-cytochrome c oxidoreductase (cytochrome b-c1 complex, complex III, CIII), resulting in different assemblies (supercomplex SCI(1)III(2)IV(1) and megacomplex MCI(2)III(2)IV(2)).

Its subcellular location is the mitochondrion inner membrane. The enzyme catalyses 4 Fe(II)-[cytochrome c] + O2 + 8 H(+)(in) = 4 Fe(III)-[cytochrome c] + 2 H2O + 4 H(+)(out). In terms of biological role, component of the cytochrome c oxidase, the last enzyme in the mitochondrial electron transport chain which drives oxidative phosphorylation. The respiratory chain contains 3 multisubunit complexes succinate dehydrogenase (complex II, CII), ubiquinol-cytochrome c oxidoreductase (cytochrome b-c1 complex, complex III, CIII) and cytochrome c oxidase (complex IV, CIV), that cooperate to transfer electrons derived from NADH and succinate to molecular oxygen, creating an electrochemical gradient over the inner membrane that drives transmembrane transport and the ATP synthase. Cytochrome c oxidase is the component of the respiratory chain that catalyzes the reduction of oxygen to water. Electrons originating from reduced cytochrome c in the intermembrane space (IMS) are transferred via the dinuclear copper A center (CU(A)) of subunit 2 and heme A of subunit 1 to the active site in subunit 1, a binuclear center (BNC) formed by heme A3 and copper B (CU(B)). The BNC reduces molecular oxygen to 2 water molecules using 4 electrons from cytochrome c in the IMS and 4 protons from the mitochondrial matrix. This is Cytochrome c oxidase subunit 3 (MT-CO3) from Papio hamadryas (Hamadryas baboon).